Reading from the N-terminus, the 119-residue chain is Large ribosomal subunit protein bL19 (119 aa).

The protein belongs to the bacterial ribosomal protein bL19 family.

Its function is as follows. This protein is located at the 30S-50S ribosomal subunit interface and may play a role in the structure and function of the aminoacyl-tRNA binding site. This Photobacterium profundum (strain SS9) protein is Large ribosomal subunit protein bL19.